Here is a 409-residue protein sequence, read N- to C-terminus: Mitochondrial protein import protein MAS5 (409 aa).

Residues 1-172 form a necessary for HAP1 repression in the absence of heme region; the sequence is MVKETKFYDI…NGQGIKFVTR (172 aa). Residues 4–72 enclose the J domain; it reads ETKFYDILGV…RDIYDQFGED (69 aa). Residues Ile-116 and 135 to 137 contribute to the substrate site; that span reads LAL. The CR-type zinc-finger motif lies at 130-213; it reads GRTAKLALNK…CNGKKVENER (84 aa). Zn(2+) is bound by residues Cys-143, Cys-146, Cys-159, Cys-162, Cys-185, and Cys-188. 3 CXXCXGXG motif repeats span residues 143-150, 159-166, and 185-192; these read CKECEGRG, CTSCNGQG, and CDVCHGTG. Residue Lys-198 forms a Glycyl lysine isopeptide (Lys-Gly) (interchain with G-Cter in ubiquitin) linkage. The Zn(2+) site is built by Cys-201 and Cys-204. Residues 201–208 form a CXXCXGXG motif repeat; it reads CKSCNGKK. Residues 215-216 and 247-249 each bind substrate; these read IL and VVF. The segment at 382-409 is disordered; the sequence is RTRASRGGANYDSDEEEQGGEGVQCASQ. Cys-406 bears the Cysteine methyl ester mark. The S-farnesyl cysteine moiety is linked to residue Cys-406. A propeptide spans 407–409 (removed in mature form); it reads ASQ.

Homodimer. Interacts with HAP1. Component of the HMC including HAP1, SRO9 and YDJ1.

It localises to the cytoplasm. The protein localises to the perinuclear region. In terms of biological role, probably involved in mitochondrial protein import. Is also required for efficient translocation of pre-pro-alpha-factor. Involved in heme regulation of HAP1, as a component of the high-molecular-weight (HMC) complex. The polypeptide is Mitochondrial protein import protein MAS5 (YDJ1) (Saccharomyces cerevisiae (strain ATCC 204508 / S288c) (Baker's yeast)).